The sequence spans 88 residues: MTDQIRTLQGRVVSDKMEKSMVVAIERVVKHPIYGKFIRRTTKLHVHDENNECGIGDVVEIRECRPLSKTKSWTLVVPRKPPARLGVQ.

It belongs to the universal ribosomal protein uS17 family. As to quaternary structure, part of the 30S ribosomal subunit.

One of the primary rRNA binding proteins, it binds specifically to the 5'-end of 16S ribosomal RNA. The polypeptide is Small ribosomal subunit protein uS17 (Yersinia pseudotuberculosis serotype O:1b (strain IP 31758)).